The following is a 728-amino-acid chain: Polyribonucleotide nucleotidyltransferase (728 aa).

2 residues coordinate Mg(2+): Asp509 and Asp515. The KH domain occupies 576-638 (TKIYTFYIPK…TKLKIAILKI (63 aa)). Residues 648–715 (GTIYKAKVKN…KFRKIKLSHK (68 aa)) form the S1 motif domain.

Belongs to the polyribonucleotide nucleotidyltransferase family. Mg(2+) is required as a cofactor.

Its subcellular location is the cytoplasm. It carries out the reaction RNA(n+1) + phosphate = RNA(n) + a ribonucleoside 5'-diphosphate. In terms of biological role, involved in mRNA degradation. Catalyzes the phosphorolysis of single-stranded polyribonucleotides processively in the 3'- to 5'-direction. In Karelsulcia muelleri (strain GWSS) (Sulcia muelleri), this protein is Polyribonucleotide nucleotidyltransferase.